A 349-amino-acid chain; its full sequence is Phosphoribosylformylglycinamidine cyclo-ligase (349 aa).

The protein belongs to the AIR synthase family.

The protein localises to the cytoplasm. It carries out the reaction 2-formamido-N(1)-(5-O-phospho-beta-D-ribosyl)acetamidine + ATP = 5-amino-1-(5-phospho-beta-D-ribosyl)imidazole + ADP + phosphate + H(+). Its pathway is purine metabolism; IMP biosynthesis via de novo pathway; 5-amino-1-(5-phospho-D-ribosyl)imidazole from N(2)-formyl-N(1)-(5-phospho-D-ribosyl)glycinamide: step 2/2. This Listeria monocytogenes serotype 4a (strain HCC23) protein is Phosphoribosylformylglycinamidine cyclo-ligase.